Here is a 361-residue protein sequence, read N- to C-terminus: Phospho-N-acetylmuramoyl-pentapeptide-transferase (361 aa).

The next 10 helical transmembrane spans lie at 21–41, 69–89, 93–113, 131–151, 168–188, 200–220, 240–260, 264–284, 289–309, and 338–358; these read YLTIRALLAMLSALFIGLMLG, VGTPTMGGILILFAFIVSILI, WSNIYLWIIIVTSIIFSAIGF, SIKFLTQSLSAIVISTWIILI, IILPLSVFDFLILSYFVIVGS, GLAIMSVILISGALAIFAYFS, LFIICAALIGSSLGFLWFNAY, IFMGDVGSLSLGAILAVIAIL, ILLFIMGGVFVAETLSVIIQV, and KIIVRFWIVTLILVLIGLASI.

It belongs to the glycosyltransferase 4 family. MraY subfamily. The cofactor is Mg(2+).

The protein resides in the cell inner membrane. It carries out the reaction UDP-N-acetyl-alpha-D-muramoyl-L-alanyl-gamma-D-glutamyl-meso-2,6-diaminopimeloyl-D-alanyl-D-alanine + di-trans,octa-cis-undecaprenyl phosphate = di-trans,octa-cis-undecaprenyl diphospho-N-acetyl-alpha-D-muramoyl-L-alanyl-D-glutamyl-meso-2,6-diaminopimeloyl-D-alanyl-D-alanine + UMP. The protein operates within cell wall biogenesis; peptidoglycan biosynthesis. Functionally, catalyzes the initial step of the lipid cycle reactions in the biosynthesis of the cell wall peptidoglycan: transfers peptidoglycan precursor phospho-MurNAc-pentapeptide from UDP-MurNAc-pentapeptide onto the lipid carrier undecaprenyl phosphate, yielding undecaprenyl-pyrophosphoryl-MurNAc-pentapeptide, known as lipid I. The polypeptide is Phospho-N-acetylmuramoyl-pentapeptide-transferase (Vesicomyosocius okutanii subsp. Calyptogena okutanii (strain HA)).